An 809-amino-acid chain; its full sequence is Ribonuclease Z 1 (809 aa).

The tract at residues 74–93 (ISSPDTYDSSSSSSTTSVSD) is disordered.

Belongs to the RNase Z family. The cofactor is Zn(2+).

It localises to the nucleus. The protein localises to the cytoplasm. The catalysed reaction is Endonucleolytic cleavage of RNA, removing extra 3' nucleotides from tRNA precursor, generating 3' termini of tRNAs. A 3'-hydroxy group is left at the tRNA terminus and a 5'-phosphoryl group is left at the trailer molecule.. Zinc phosphodiesterase, which displays some tRNA 3'-processing endonuclease activity. May be involved in tRNA maturation, by removing a 3'-trailer from precursor tRNA. In Schizosaccharomyces pombe (strain 972 / ATCC 24843) (Fission yeast), this protein is Ribonuclease Z 1 (trz1).